Reading from the N-terminus, the 538-residue chain is Phosphoenolpyruvate carboxykinase (ATP) (538 aa).

Residues Arg64, Tyr205, and Lys211 each contribute to the substrate site. Residues Lys211, His230, and 246 to 254 (GLSGTGKTT) each bind ATP. Positions 211 and 230 each coordinate Mn(2+). Asp267 is a Mn(2+) binding site. Residues Glu295, Arg331, 447 to 448 (RI), and Thr453 contribute to the ATP site. Position 331 (Arg331) interacts with substrate.

This sequence belongs to the phosphoenolpyruvate carboxykinase (ATP) family. In terms of assembly, monomer. The cofactor is Mn(2+).

The protein resides in the cytoplasm. The enzyme catalyses oxaloacetate + ATP = phosphoenolpyruvate + ADP + CO2. The protein operates within carbohydrate biosynthesis; gluconeogenesis. Functionally, involved in the gluconeogenesis. Catalyzes the conversion of oxaloacetate (OAA) to phosphoenolpyruvate (PEP) through direct phosphoryl transfer between the nucleoside triphosphate and OAA. The polypeptide is Phosphoenolpyruvate carboxykinase (ATP) (Haemophilus influenzae (strain PittEE)).